Here is a 228-residue protein sequence, read N- to C-terminus: Imidazole glycerol phosphate synthase subunit HisH (228 aa).

One can recognise a Glutamine amidotransferase type-1 domain in the interval 4–218 (DIAVVDYGMG…VTWNPGEHAS (215 aa)). Cys-83 serves as the catalytic Nucleophile. Catalysis depends on residues His-193 and Glu-195.

As to quaternary structure, heterodimer of HisH and HisF.

The protein localises to the cytoplasm. It catalyses the reaction 5-[(5-phospho-1-deoxy-D-ribulos-1-ylimino)methylamino]-1-(5-phospho-beta-D-ribosyl)imidazole-4-carboxamide + L-glutamine = D-erythro-1-(imidazol-4-yl)glycerol 3-phosphate + 5-amino-1-(5-phospho-beta-D-ribosyl)imidazole-4-carboxamide + L-glutamate + H(+). The catalysed reaction is L-glutamine + H2O = L-glutamate + NH4(+). The protein operates within amino-acid biosynthesis; L-histidine biosynthesis; L-histidine from 5-phospho-alpha-D-ribose 1-diphosphate: step 5/9. Functionally, IGPS catalyzes the conversion of PRFAR and glutamine to IGP, AICAR and glutamate. The HisH subunit catalyzes the hydrolysis of glutamine to glutamate and ammonia as part of the synthesis of IGP and AICAR. The resulting ammonia molecule is channeled to the active site of HisF. This Thiobacillus denitrificans (strain ATCC 25259 / T1) protein is Imidazole glycerol phosphate synthase subunit HisH.